A 205-amino-acid polypeptide reads, in one-letter code: Cytochrome c oxidase subunit 3 (205 aa).

The next 5 membrane-spanning stretches (helical) occupy residues 28-48 (GTIV…AMYF), 72-92 (ALVI…GVFA), 104-124 (WFSL…YEYF), 142-162 (FFIT…AFVV), and 184-204 (SYYW…IYFI).

The protein belongs to the cytochrome c oxidase subunit 3 family. Associates with subunits I, II and IV to form cytochrome c oxidase.

Its subcellular location is the cell membrane. It catalyses the reaction 4 Fe(II)-[cytochrome c] + O2 + 8 H(+)(in) = 4 Fe(III)-[cytochrome c] + 2 H2O + 4 H(+)(out). This is Cytochrome c oxidase subunit 3 (ctaE) from Corynebacterium diphtheriae (strain ATCC 700971 / NCTC 13129 / Biotype gravis).